The sequence spans 404 residues: Probable pectate lyase 18 (404 aa).

A signal peptide spans 1-20; that stretch reads MSTLFFTFSLLLLAPLLVIS. Asn-37 carries N-linked (GlcNAc...) asparagine glycosylation. Cys-159 and Cys-178 are disulfide-bonded. A glycan (N-linked (GlcNAc...) asparagine) is linked at Asn-191. The Ca(2+) site is built by Asp-200, Asp-202, Asp-224, and Asp-228. Arg-280 is a catalytic residue.

It belongs to the polysaccharide lyase 1 family. It depends on Ca(2+) as a cofactor. In terms of tissue distribution, predominantly found in the pistil where it is found in the outer five layers of the strands of transmitting tissue within the upper two-thirds of the style. Found at much lower levels in the anthers and vegetative organs.

It localises to the secreted. It carries out the reaction Eliminative cleavage of (1-&gt;4)-alpha-D-galacturonan to give oligosaccharides with 4-deoxy-alpha-D-galact-4-enuronosyl groups at their non-reducing ends.. Its pathway is glycan metabolism; pectin degradation; 2-dehydro-3-deoxy-D-gluconate from pectin: step 2/5. May have a role in the development of the transmitting tissue of the style and/or in the events related to pollination such as some aspect in the facilitation of compatible pollen tube growth. This Solanum lycopersicum (Tomato) protein is Probable pectate lyase 18.